The following is a 415-amino-acid chain: Serine hydroxymethyltransferase (415 aa).

Residues leucine 120 and 124-126 (GHL) contribute to the (6S)-5,6,7,8-tetrahydrofolate site. Position 229 is an N6-(pyridoxal phosphate)lysine (lysine 229).

This sequence belongs to the SHMT family. In terms of assembly, homodimer. The cofactor is pyridoxal 5'-phosphate.

It localises to the cytoplasm. The enzyme catalyses (6R)-5,10-methylene-5,6,7,8-tetrahydrofolate + glycine + H2O = (6S)-5,6,7,8-tetrahydrofolate + L-serine. Its pathway is one-carbon metabolism; tetrahydrofolate interconversion. It participates in amino-acid biosynthesis; glycine biosynthesis; glycine from L-serine: step 1/1. Its function is as follows. Catalyzes the reversible interconversion of serine and glycine with tetrahydrofolate (THF) serving as the one-carbon carrier. This reaction serves as the major source of one-carbon groups required for the biosynthesis of purines, thymidylate, methionine, and other important biomolecules. Also exhibits THF-independent aldolase activity toward beta-hydroxyamino acids, producing glycine and aldehydes, via a retro-aldol mechanism. The protein is Serine hydroxymethyltransferase of Caldicellulosiruptor bescii (strain ATCC BAA-1888 / DSM 6725 / KCTC 15123 / Z-1320) (Anaerocellum thermophilum).